We begin with the raw amino-acid sequence, 209 residues long: Protein GrpE (209 aa).

A compositionally biased stretch (polar residues) spans 1 to 13 (MSNDSSKAKQNQV). The tract at residues 1–33 (MSNDSSKAKQNQVDEAVEGEILTESEVETGNDE) is disordered. Residues 15–31 (EAVEGEILTESEVETGN) are compositionally biased toward acidic residues.

Belongs to the GrpE family. As to quaternary structure, homodimer.

The protein localises to the cytoplasm. Participates actively in the response to hyperosmotic and heat shock by preventing the aggregation of stress-denatured proteins, in association with DnaK and GrpE. It is the nucleotide exchange factor for DnaK and may function as a thermosensor. Unfolded proteins bind initially to DnaJ; upon interaction with the DnaJ-bound protein, DnaK hydrolyzes its bound ATP, resulting in the formation of a stable complex. GrpE releases ADP from DnaK; ATP binding to DnaK triggers the release of the substrate protein, thus completing the reaction cycle. Several rounds of ATP-dependent interactions between DnaJ, DnaK and GrpE are required for fully efficient folding. In Shewanella woodyi (strain ATCC 51908 / MS32), this protein is Protein GrpE.